Consider the following 389-residue polypeptide: Large envelope protein (389 aa).

Met-1 carries the N-acetylmethionine modification. Residue Gly-2 is the site of N-myristoyl glycine; by host attachment. A pre-S1 region spans residues 2-108 (GQNLSTSNPL…PPLRTTHPQA (107 aa)). The tract at residues 2–163 (GQNLSTSNPL…SSRIGDPALN (162 aa)) is pre-S. At 2 to 170 (GQNLSTSNPL…ALNMENITSG (169 aa)) the chain is on the virion surface; in external conformation side. At 2 to 242 (GQNLSTSNPL…VGYRWMCLRR (241 aa)) the chain is on the intravirion; in internal conformation side. Disordered stretches follow at residues 76–102 (TLPA…PPLR) and 133–154 (GGSS…LSTS). Positions 85–95 (STNRQSGRQPT) are enriched in polar residues. The tract at residues 109-163 (MQWNSTTFHQTLQDPRVRGLYLPAGGSSSGTVNPVPTTASPTLSTSSRIGDPALN) is pre-S2. Positions 142 to 154 (PVPTTASPTLSTS) are enriched in low complexity. A helical transmembrane segment spans residues 171 to 191 (FLGPLLVLQAGFFLLTRILTI). Residues 192–242 (PQSLDSWWTSLSFLGGTTVCLGQNSQSPTSNHSPTSCPPTCVGYRWMCLRR) are Intravirion; in external conformation-facing. Residues 243 to 263 (FIIFLFILLLCLIFLLVLLDY) form a helical membrane-spanning segment. Residues 264-337 (QGMLPVCPLI…WASARFSWLS (74 aa)) lie on the Virion surface side of the membrane. A glycan (N-linked (GlcNAc...) asparagine; by host) is linked at Asn-309. Residues 338–358 (LLVPFVQWFVGLSPTVWLSVI) traverse the membrane as a helical segment. Residues 359–364 (WMMWYW) are Intravirion-facing. The helical transmembrane segment at 365–387 (GPSLYNTLSPFLPLLPIFFYLWV) threads the bilayer. Residues 388 to 389 (YI) are Virion surface-facing.

The protein belongs to the orthohepadnavirus major surface antigen family. In terms of assembly, in its internal form (Li-HBsAg), interacts with the capsid protein and with the isoform S. Interacts with host chaperone CANX. As to quaternary structure, associates with host chaperone CANX through its pre-S2 N glycan; this association may be essential for isoform M proper secretion. Interacts with isoform L. Interacts with the antigens of satellite virus HDV (HDVAgs); this interaction is required for encapsidation of HDV genomic RNA. Isoform M is N-terminally acetylated by host at a ratio of 90%, and N-glycosylated by host at the pre-S2 region. Post-translationally, myristoylated.

It is found in the virion membrane. Functionally, the large envelope protein exists in two topological conformations, one which is termed 'external' or Le-HBsAg and the other 'internal' or Li-HBsAg. In its external conformation the protein attaches the virus to cell receptors and thereby initiating infection. This interaction determines the species specificity and liver tropism. This attachment induces virion internalization predominantly through caveolin-mediated endocytosis. The large envelope protein also assures fusion between virion membrane and endosomal membrane. In its internal conformation the protein plays a role in virion morphogenesis and mediates the contact with the nucleocapsid like a matrix protein. Its function is as follows. The middle envelope protein plays an important role in the budding of the virion. It is involved in the induction of budding in a nucleocapsid independent way. In this process the majority of envelope proteins bud to form subviral lipoprotein particles of 22 nm of diameter that do not contain a nucleocapsid. This Homo sapiens (Human) protein is Large envelope protein.